The sequence spans 29 residues: Cytolysin Uc-1 (29 aa).

Positions 1–15 (DEQTGSKGPNENLPS) are enriched in polar residues. The disordered stretch occupies residues 1 to 29 (DEQTGSKGPNENLPSQKDLXAKASXLTEV).

Its subcellular location is the secreted. It is found in the nematocyst. The protein resides in the target cell membrane. Pore-forming toxin that lyses bovine erythrocytes at nanomolar concentrations. Is devoid of enzymatic activity. Binds to monolayers and efficiently permeabilizes small lipid vesicles composed of sphingomyelin and cholesterol. The cytolytic activity is not prevented by cholesterol or sphingomyelin. This chain is Cytolysin Uc-1, found in Urticina crassicornis (Mottled anemone).